A 289-amino-acid chain; its full sequence is tRNA acetyltransferase TAN1 (289 aa).

Positions 1–10 (MGEKRNRNGK) are enriched in basic and acidic residues. Disordered stretches follow at residues 1-31 (MGEK…DPGT) and 64-83 (DIKE…LSIE). At serine 72 the chain carries Phosphoserine. In terms of domain architecture, THUMP spans 146-259 (ADPKNMVKRT…KSNIGMCVVD (114 aa)).

It localises to the cytoplasm. The protein resides in the nucleus. Functionally, probable tRNA acetyltransferase required for the formation of the modified nucleoside N(4)-acetylcytidine in serine and leucine tRNAs. Binds RNA. The polypeptide is tRNA acetyltransferase TAN1 (TAN1) (Saccharomyces cerevisiae (strain ATCC 204508 / S288c) (Baker's yeast)).